Reading from the N-terminus, the 174-residue chain is Secretory-abundant heat soluble protein 68234 (174 aa).

Positions 1 to 19 (MARFLVALALFGVVAMTAA) are cleaved as a signal peptide. An SAHS-c1 region spans residues 26–57 (EWSGKPWLGKFVAEVTDKSENWEAFVDALGLP). Positions 72 to 100 (YKQGDHYHHIFALPDKNFEKDIEFTLGQE) are SAHS-c2. The tract at residues 113-162 (KYSEDGEKLVADVSIPTKGKTIRSEYEVQGDQLIKTYKTGDIVAKKWFKK) is SAHS-c3.

Belongs to the Secretory-abundant heat soluble protein (SAHS) family.

The protein resides in the secreted. Functionally, secreted heat soluble protein acting as a molecular shield in water-deficient condition. Tardigrade-specific intrinsically disordered proteins (TDPs) are essential for desiccation tolerance by forming non-crystalline amorphous solids upon desiccation, and this vitrified state mirrors their protective capabilities. The polypeptide is Secretory-abundant heat soluble protein 68234 (Hypsibius exemplaris (Freshwater tardigrade)).